The sequence spans 33 residues: rho operon leader peptide (33 aa).

The segment covering 1–25 (MRSEQISGSSLNPSCRFSSAYSPVT) has biased composition (polar residues). Positions 1 to 33 (MRSEQISGSSLNPSCRFSSAYSPVTRQRKDMSR) are disordered.

The sequence is that of rho operon leader peptide (rhoL) from Escherichia coli O157:H7.